We begin with the raw amino-acid sequence, 440 residues long: Ribulose bisphosphate carboxylase large chain (440 aa).

K4 carries the N6,N6,N6-trimethyllysine modification. Residues N113 and T163 each coordinate substrate. The active-site Proton acceptor is K165. Substrate is bound at residue K167. Mg(2+)-binding residues include K191, D193, and E194. K191 is subject to N6-carboxylysine. Residue H284 is the Proton acceptor of the active site. R285, H317, and S369 together coordinate substrate.

Belongs to the RuBisCO large chain family. Type I subfamily. As to quaternary structure, heterohexadecamer of 8 large chains and 8 small chains; disulfide-linked. The disulfide link is formed within the large subunit homodimers. It depends on Mg(2+) as a cofactor. Post-translationally, the disulfide bond which can form in the large chain dimeric partners within the hexadecamer appears to be associated with oxidative stress and protein turnover.

It is found in the plastid. The protein resides in the chloroplast. The enzyme catalyses 2 (2R)-3-phosphoglycerate + 2 H(+) = D-ribulose 1,5-bisphosphate + CO2 + H2O. The catalysed reaction is D-ribulose 1,5-bisphosphate + O2 = 2-phosphoglycolate + (2R)-3-phosphoglycerate + 2 H(+). Functionally, ruBisCO catalyzes two reactions: the carboxylation of D-ribulose 1,5-bisphosphate, the primary event in carbon dioxide fixation, as well as the oxidative fragmentation of the pentose substrate in the photorespiration process. Both reactions occur simultaneously and in competition at the same active site. The chain is Ribulose bisphosphate carboxylase large chain from Onoclea sensibilis (Sensitive fern).